A 281-amino-acid polypeptide reads, in one-letter code: Bifunctional protein FolD (281 aa).

NADP(+) is bound by residues 165-167, Thr-192, and Val-233; that span reads GRG.

It belongs to the tetrahydrofolate dehydrogenase/cyclohydrolase family. Homodimer.

The catalysed reaction is (6R)-5,10-methylene-5,6,7,8-tetrahydrofolate + NADP(+) = (6R)-5,10-methenyltetrahydrofolate + NADPH. The enzyme catalyses (6R)-5,10-methenyltetrahydrofolate + H2O = (6R)-10-formyltetrahydrofolate + H(+). It participates in one-carbon metabolism; tetrahydrofolate interconversion. Functionally, catalyzes the oxidation of 5,10-methylenetetrahydrofolate to 5,10-methenyltetrahydrofolate and then the hydrolysis of 5,10-methenyltetrahydrofolate to 10-formyltetrahydrofolate. In Mycobacterium avium (strain 104), this protein is Bifunctional protein FolD.